A 172-amino-acid polypeptide reads, in one-letter code: Cytochrome b6-f complex iron-sulfur subunit (172 aa).

Residues L19–V39 form a helical membrane-spanning segment. Residues G61–F161 enclose the Rieske domain. 4 residues coordinate [2Fe-2S] cluster: C107, H109, C125, and H128. The cysteines at positions 112 and 127 are disulfide-linked.

It belongs to the Rieske iron-sulfur protein family. In terms of assembly, the 4 large subunits of the cytochrome b6-f complex are cytochrome b6, subunit IV (17 kDa polypeptide, PetD), cytochrome f and the Rieske protein, while the 4 small subunits are PetG, PetL, PetM and PetN. The complex functions as a dimer. The cofactor is [2Fe-2S] cluster.

It is found in the cellular thylakoid membrane. It catalyses the reaction 2 oxidized [plastocyanin] + a plastoquinol + 2 H(+)(in) = 2 reduced [plastocyanin] + a plastoquinone + 4 H(+)(out). Its function is as follows. Component of the cytochrome b6-f complex, which mediates electron transfer between photosystem II (PSII) and photosystem I (PSI), cyclic electron flow around PSI, and state transitions. This Synechococcus sp. (strain JA-2-3B'a(2-13)) (Cyanobacteria bacterium Yellowstone B-Prime) protein is Cytochrome b6-f complex iron-sulfur subunit.